The chain runs to 116 residues: MSKLKKRKGDEGESIASNFLISLDHEILKRNYRFLHCEIDIISVKEEVLYFSEVKFWKEFKFFDPRFTFNLAKQTKMRKAAKGFLAENLSFQNHFVSFCLVSVNEKKGCKYYLDLF.

This sequence belongs to the UPF0102 family.

The chain is UPF0102 protein LA_2381 from Leptospira interrogans serogroup Icterohaemorrhagiae serovar Lai (strain 56601).